The following is a 1475-amino-acid chain: MKRRELEKKLRKVRVTPQQDKYYTIGNLQWAIRMINLMGIKCVCDEECSAAEVALIITQFSALDLENSPIRGKEEVAIKNTLKVFWSLLAGYKPESTETALGYWEAFTYREREARADKEGEIKSIYPSLTQNTQNKKQTSNQTNTQSLPAITTQDGTPRFDPDLMKQLKIWSDATERNGVDLHAVNILGVITANLVQEEIKLLLNSTPKWRLDVQLIESKVREKENAHRTWKQHHPEAPKTDEIIGKGLSSAEQATLISVECRETFRQWVLQAAMEVAQAKHATPGPINIHQGPKEPYTDFINRLVAALEGMAAPETTKEYLLQHLSIDHANEDCQSILRPLGPNTPMEKKLEACRVVGSQKSKMQFLVAAMKEMGIQSPIPAVLPHTPEAYASQTSGPEDGRRCYGCGKTGHLKRNCKQQKCYHCGKPGHQARNCRSKNREVLLCPLWAEEPTTEQFSPEQHEFCDPICTPSYIRLDKQPFIKVFIGGRWVKGLVDTGADEVVLKNIHWDRIKGYPGTPIKQIGVNGVNVAKRKTHVEWRFKDKTGIIDVLFSDTPVNLFGRSLLRSIVTCFTLLVHTEKIEPLPVKVRGPGPKVPQWPLTKEKYQALKEIVKDLLAEGKISEAAWDNPYNTPVFVIKKKGTGRWRMLMDFRELNKITVKGQEFSTGLPYPPGIKECEHLTAIDIKDAYFTIPLHEDFRPFTAFSVVPVNREGPIERFQWNVLPQGWVCSPAIYQTTTQKIIENIKKSHPDVMLYQYMDDLLIGSNRDDHKQIVQEIRDKLGSYGFKTPDEKVQEERVKWIGFELTPKKWRFQPRQLKIKNPLTVNELQQLVGNCVWVQPEVKIPLYPLTDLLRDKTNLQEKIQLTPEAIKCVEEFNLKLKDPEWKDRIREGAELVIKIQMVPRGIVFDLLQDGNPIWGGVKGLNYDHSNKIKKILRTMNELNRTVVIMTGREASFLLPGSSEDWEAALQKEESLTQIFPVKFYRHSCRWTSICGPVRENLTTYYTDGGKKGKTAAAVYWCEGRTKSKVFPGTNQQAELKAICMALLDGPPKMNIITDSRYAYEGMREEPETWAREGIWLEIAKILPFKQYVGVGWVPAHKGIGGNTEADEGVKKALEQMAPCSPPEAILLKPGEKQNLETGIYMQGLRPQSFLPRADLPVAITGTMVDSELQLQLLNIGTEHIRIQKDEVFMTCFLENIPSATEDHERWHTSPDILVRQFHLPKRIAKEIVARCQECKRTTTSPVRGTNPRGRFLWQMDNTHWNKTIIWVAVETNSGLVEAQVIPEETALQVALCILQLIQRYTVLHLHSDNGPCFTAHRIENLCKYLGITKTTGIPYNPQSQGVVERAHRDLKDRLAAYQGDCETVEAALSLALVSLNKKRGGIGGHTPYEIYLESEHTKYQDQLEQQFSKQKIEKWCYVRNRRKEWKGPYKVLWDGDGAAVIEEEGKTALYPHRHMRFIPPPDSDIQDGSS.

The span at 130–147 shows a compositional bias: low complexity; it reads TQNTQNKKQTSNQTNTQS. Residues 130–159 form a disordered region; the sequence is TQNTQNKKQTSNQTNTQSLPAITTQDGTPR. CCHC-type zinc fingers lie at residues 403 to 420 and 421 to 438; these read RRCY…NCKQ and QKCY…NCRS. One can recognise a Peptidase A2 domain in the interval 492–565; the sequence is VKGLVDTGAD…TPVNLFGRSL (74 aa). Residue aspartate 497 is part of the active site. Residues 619–806 form the Reverse transcriptase domain; it reads EGKISEAAWD…ERVKWIGFEL (188 aa). Residues 999–1119 form the RNase H type-1 domain; it reads RENLTTYYTD…ADEGVKKALE (121 aa). The Integrase-type zinc-finger motif lies at 1199–1240; sequence ENIPSATEDHERWHTSPDILVRQFHLPKRIAKEIVARCQECK. Residues histidine 1208, histidine 1212, cysteine 1236, and cysteine 1239 each coordinate Zn(2+). In terms of domain architecture, Integrase catalytic spans 1248–1400; it reads RGTNPRGRFL…TPYEIYLESE (153 aa). Positions 1419–1465 form a DNA-binding region, integrase-type; sequence KWCYVRNRRKEWKGPYKVLWDGDGAAVIEEEGKTALYPHRHMRFIPP.

Interacts with host light chain cytoplasmic dynein DYNLL1; this interaction is critical for intracellular microtubule-dependent viral genome transport. In terms of processing, specific enzymatic cleavages by the viral protease yield mature proteins. The protease is released by autocatalytic cleavage. The polyprotein is cleaved during and after budding, this process is termed maturation.

Its subcellular location is the virion. It catalyses the reaction DNA(n) + a 2'-deoxyribonucleoside 5'-triphosphate = DNA(n+1) + diphosphate. The enzyme catalyses Endohydrolysis of RNA in RNA/DNA hybrids. Three different cleavage modes: 1. sequence-specific internal cleavage of RNA. Human immunodeficiency virus type 1 and Moloney murine leukemia virus enzymes prefer to cleave the RNA strand one nucleotide away from the RNA-DNA junction. 2. RNA 5'-end directed cleavage 13-19 nucleotides from the RNA end. 3. DNA 3'-end directed cleavage 15-20 nucleotides away from the primer terminus.. The catalysed reaction is 3'-end directed exonucleolytic cleavage of viral RNA-DNA hybrid.. Functionally, matrix protein p16 forms the outer shell of the core of the virus, lining the inner surface of the viral membrane. Its function is as follows. Capsid protein p26 forms the conical core of the virus that encapsulates the genomic RNA-nucleocapsid complex. Interaction between incoming particle-associated Gag proteins and host dynein allows intracellular microtubule-dependent virus transport toward the perinuclear region, prior to nucleus translocation and integration into host genome. In terms of biological role, the aspartyl protease mediates proteolytic cleavages of Gag and Gag-Pol polyproteins during or shortly after the release of the virion from the plasma membrane. Cleavages take place as an ordered, step-wise cascade to yield mature proteins. This process is called maturation. Displays maximal activity during the budding process just prior to particle release from the cell. Reverse transcriptase/ribonuclease H (RT) is a multifunctional enzyme that converts the viral RNA genome into dsDNA in the cytoplasm, shortly after virus entry into the cell. This enzyme displays a DNA polymerase activity that can copy either DNA or RNA templates, and a ribonuclease H (RNase H) activity that cleaves the RNA strand of RNA-DNA heteroduplexes in a partially processive 3' to 5' endonucleasic mode. Conversion of viral genomic RNA into dsDNA requires many steps. A tRNA binds to the primer-binding site (PBS) situated at the 5'-end of the viral RNA. RT uses the 3' end of the tRNA primer to perform a short round of RNA-dependent minus-strand DNA synthesis. The reading proceeds through the U5 region and ends after the repeated (R) region which is present at both ends of viral RNA. The portion of the RNA-DNA heteroduplex is digested by the RNase H, resulting in a ssDNA product attached to the tRNA primer. This ssDNA/tRNA hybridizes with the identical R region situated at the 3' end of viral RNA. This template exchange, known as minus-strand DNA strong stop transfer, can be either intra- or intermolecular. RT uses the 3' end of this newly synthesized short ssDNA to perform the RNA-dependent minus-strand DNA synthesis of the whole template. RNase H digests the RNA template except for a polypurine tract (PPT) situated at the 5'-end of the genome. It is not clear if both polymerase and RNase H activities are simultaneous. RNase H probably can proceed both in a polymerase-dependent (RNA cut into small fragments by the same RT performing DNA synthesis) and a polymerase-independent mode (cleavage of remaining RNA fragments by free RTs). Secondly, RT performs DNA-directed plus-strand DNA synthesis using the PPT that has not been removed by RNase H as primer. PPT and tRNA primers are then removed by RNase H. The 3' and 5' ssDNA PBS regions hybridize to form a circular dsDNA intermediate. Strand displacement synthesis by RT to the PBS and PPT ends produces a blunt ended, linear dsDNA copy of the viral genome that includes long terminal repeats (LTRs) at both ends. Functionally, integrase catalyzes viral DNA integration into the host chromosome, by performing a series of DNA cutting and joining reactions. This enzyme activity takes place after virion entry into a cell and reverse transcription of the RNA genome in dsDNA. The sequence is that of Gag-Pol polyprotein (gag-pol) from Bovine immunodeficiency virus (strain R29) (BIV).